The primary structure comprises 794 residues: MANTTLTLDIIGMTCAACSNRIEKKLNRMNHVQAKVNLTTEKATIDYESDDYHLEDFVEQIQSLGYDVAVEQVELNINGMTCAACSNRIEKVLNQTQGVQQATVNLTTEQALIKYYPSATNTEALIKRIQNIGYDAETKTSSKAQSNRKKQELKHKRNKLIISAILSLPLLLVMVVHISPISIPSILVNPWVQLILSTPVQFIIGWQFYVGAYKNLRNGSANMDVLVAVGTSAAYFYSIYEMMMWLTHQTHHPHLYFETSAILITLILLGKYLEARAKSQTTNALSELLNLQAKEARVIKENKEIMLPLDKVKVGDTLLIKPGEKIPVDGKVTKGDTSIDESMLTGESIPVEKSSGDSVIGSTMNKNGSIMIEATQVGGDTALSHIIKVVEDAQSSKAPIQRLADIISGYFVPIVVSIAVITFIIWIIFVHPGQFEPALVSAISVLVIACPCALGLATPTSIMVGTGRAAENGILFKGGQFVERAHYVDTIVLDKTGTITNGQPVVTDYVGDNDTLQLLASAENASEHPLADAIVTYAKDKGLNLLDNDTFKSIPGHGIKATIHQQQILVGNRKLMNDYNISISNKLNDQLNHYEHLGQTAMMIAVDNQINGIIAVADTVKNDAKQAIKELRNMNIDVVMLTGDNNRTAQTIAKQVGIEHVIAEVLPEEKAHQISLLQDKGKQVAMVGDGINDAPALVKADIGMAIGTGAEVAIEAADITILGGDLLLVPKAIKASKATIKNIRQNLFWAFGYNVAGIPIAACGLLAPWIAGAAMALSSVSVVMNALRLKKMKL.

HMA domains lie at 4–69 (TTLT…YDVA) and 71–137 (EQVE…YDAE). Cu(+) contacts are provided by cysteine 15, cysteine 18, cysteine 82, and cysteine 85. 6 consecutive transmembrane segments (helical) span residues 161–181 (IISA…ISPI), 186–206 (ILVN…IIGW), 225–245 (VLVA…MMMW), 255–275 (LYFE…YLEA), 410–430 (YFVP…IIFV), and 437–457 (PALV…LGLA). Aspartate 494 (4-aspartylphosphate intermediate) is an active-site residue. Residues aspartate 689 and aspartate 693 each coordinate Mg(2+). The next 2 membrane-spanning stretches (helical) occupy residues 747–767 (LFWA…GLLA) and 773–789 (AAMA…ALRL).

The protein belongs to the cation transport ATPase (P-type) (TC 3.A.3) family. Type IB subfamily.

Its subcellular location is the cell membrane. The enzyme catalyses Cu(+)(in) + ATP + H2O = Cu(+)(out) + ADP + phosphate + H(+). In terms of biological role, involved in copper export. In Staphylococcus epidermidis (strain ATCC 35984 / DSM 28319 / BCRC 17069 / CCUG 31568 / BM 3577 / RP62A), this protein is Copper-exporting P-type ATPase (copA).